The sequence spans 271 residues: Phosphonates import ATP-binding protein PhnC 2 (271 aa).

The ABC transporter domain maps to 2–246 (LTVDNLEKTY…ARDEIYRGGE (245 aa)). ATP is bound at residue 35-42 (GPSGAGKS). Basic and acidic residues predominate over residues 243-254 (RGGESIADREEP). Positions 243-271 (RGGESIADREEPSAGNSTDADDVIAERGD) are disordered.

This sequence belongs to the ABC transporter superfamily. Phosphonates importer (TC 3.A.1.9.1) family. The complex is composed of two ATP-binding proteins (PhnC), two transmembrane proteins (PhnE) and a solute-binding protein (PhnD).

Its subcellular location is the cell membrane. It carries out the reaction phosphonate(out) + ATP + H2O = phosphonate(in) + ADP + phosphate + H(+). Its function is as follows. Part of the ABC transporter complex PhnCDE involved in phosphonates import. Responsible for energy coupling to the transport system. This is Phosphonates import ATP-binding protein PhnC 2 from Haloarcula marismortui (strain ATCC 43049 / DSM 3752 / JCM 8966 / VKM B-1809) (Halobacterium marismortui).